Consider the following 228-residue polypeptide: 2,3-bisphosphoglycerate-dependent phosphoglycerate mutase (228 aa).

Substrate contacts are provided by residues 8–15 (RHGQSAWN), 21–22 (TG), R60, 87–90 (ERHY), K98, 114–115 (RR), and 180–181 (GN). H9 (tele-phosphohistidine intermediate) is an active-site residue. Catalysis depends on E87, which acts as the Proton donor/acceptor.

It belongs to the phosphoglycerate mutase family. BPG-dependent PGAM subfamily. In terms of assembly, homodimer.

The catalysed reaction is (2R)-2-phosphoglycerate = (2R)-3-phosphoglycerate. The protein operates within carbohydrate degradation; glycolysis; pyruvate from D-glyceraldehyde 3-phosphate: step 3/5. In terms of biological role, catalyzes the interconversion of 2-phosphoglycerate and 3-phosphoglycerate. The chain is 2,3-bisphosphoglycerate-dependent phosphoglycerate mutase from Rhizorhabdus wittichii (strain DSM 6014 / CCUG 31198 / JCM 15750 / NBRC 105917 / EY 4224 / RW1) (Sphingomonas wittichii).